Here is a 120-residue protein sequence, read N- to C-terminus: Glycine cleavage system H protein (120 aa).

A Lipoyl-binding domain is found at 19-101 (DGTVGITDHA…YEGGWLFKLE (83 aa)). At Lys60 the chain carries N6-lipoyllysine.

This sequence belongs to the GcvH family. In terms of assembly, the glycine cleavage system is composed of four proteins: P, T, L and H. It depends on (R)-lipoate as a cofactor.

In terms of biological role, the glycine cleavage system catalyzes the degradation of glycine. The H protein shuttles the methylamine group of glycine from the P protein to the T protein. The protein is Glycine cleavage system H protein of Deinococcus deserti (strain DSM 17065 / CIP 109153 / LMG 22923 / VCD115).